Reading from the N-terminus, the 278-residue chain is Biotin synthase (278 aa).

One can recognise a Radical SAM core domain in the interval 1–227 (MQIMLCAISN…QSVVMVAGGR (227 aa)). 3 residues coordinate [4Fe-4S] cluster: C16, C20, and C23. Residues C60, C95, and C153 each contribute to the [2Fe-2S] cluster site.

This sequence belongs to the radical SAM superfamily. Biotin synthase family. As to quaternary structure, homodimer. The cofactor is [4Fe-4S] cluster. Requires [2Fe-2S] cluster as cofactor.

It carries out the reaction (4R,5S)-dethiobiotin + (sulfur carrier)-SH + 2 reduced [2Fe-2S]-[ferredoxin] + 2 S-adenosyl-L-methionine = (sulfur carrier)-H + biotin + 2 5'-deoxyadenosine + 2 L-methionine + 2 oxidized [2Fe-2S]-[ferredoxin]. The protein operates within cofactor biosynthesis; biotin biosynthesis; biotin from 7,8-diaminononanoate: step 2/2. Catalyzes the conversion of dethiobiotin (DTB) to biotin by the insertion of a sulfur atom into dethiobiotin via a radical-based mechanism. This is Biotin synthase from Campylobacter jejuni subsp. jejuni serotype O:6 (strain 81116 / NCTC 11828).